Consider the following 107-residue polypeptide: Urease subunit beta (107 aa).

Belongs to the urease beta subunit family. Heterotrimer of UreA (gamma), UreB (beta) and UreC (alpha) subunits. Three heterotrimers associate to form the active enzyme.

The protein resides in the cytoplasm. The catalysed reaction is urea + 2 H2O + H(+) = hydrogencarbonate + 2 NH4(+). It functions in the pathway nitrogen metabolism; urea degradation; CO(2) and NH(3) from urea (urease route): step 1/1. This Teredinibacter turnerae (strain ATCC 39867 / T7901) protein is Urease subunit beta.